Reading from the N-terminus, the 338-residue chain is Mitoferrin-1 (338 aa).

The disordered stretch occupies residues 1-37 (MELRRGGVGNQAAGRRMDGDCRDGGCGSKDAGSEDYE). Solcar repeat units follow at residues 43–131 (ASVS…MKRT), 141–225 (NSHL…LQEQ), and 232–326 (YNPQ…FKYI). 6 helical membrane passes run 45 to 64 (VSTHMTAGAMAGILEHSIMY), 106 to 125 (GLNVMMMGAGPAHAMYFACY), 143 to 162 (HLANGVAGSMATLLHDAVMN), 200 to 219 (SYTTQLTMNIPFQSIHFITY), 234 to 253 (PQSHIISGGLAGALAAAATT), and 301 to 320 (GIQARVIYQMPSTAISWSVY).

The protein belongs to the mitochondrial carrier (TC 2.A.29) family. As to quaternary structure, interacts with ACB10; this interaction stabilizes SLC25A37 and enhances the function of SLC25A37 to import mitochondrial iron during erythroid differentiation. As to expression, highly expressed in hematopoietic organs, fetal liver, bone marrow and spleen.

The protein localises to the mitochondrion inner membrane. It carries out the reaction Fe(2+)(in) = Fe(2+)(out). Mitochondrial iron transporter that specifically mediates iron uptake in developing erythroid cells, thereby playing an essential role in heme biosynthesis. This Mus musculus (Mouse) protein is Mitoferrin-1 (Slc25a37).